A 476-amino-acid chain; its full sequence is Glycogen synthase (476 aa).

Residue K15 coordinates ADP-alpha-D-glucose.

This sequence belongs to the glycosyltransferase 1 family. Bacterial/plant glycogen synthase subfamily.

It carries out the reaction [(1-&gt;4)-alpha-D-glucosyl](n) + ADP-alpha-D-glucose = [(1-&gt;4)-alpha-D-glucosyl](n+1) + ADP + H(+). It functions in the pathway glycan biosynthesis; glycogen biosynthesis. Functionally, synthesizes alpha-1,4-glucan chains using ADP-glucose. This Haemophilus influenzae (strain 86-028NP) protein is Glycogen synthase.